The primary structure comprises 49 residues: uncharacterized protein (49 aa).

Residues 1 to 22 (MKLNAFHLVVVVLIVSIFSVSS) form the signal peptide.

The protein localises to the secreted. This is an uncharacterized protein from Dictyostelium discoideum (Social amoeba).